The chain runs to 502 residues: Glutamate--tRNA ligase (502 aa).

Positions 12–22 (PSPTGYLHVGG) match the 'HIGH' region motif. Residues 259 to 263 (KLSKR) carry the 'KMSKS' region motif. K262 serves as a coordination point for ATP.

This sequence belongs to the class-I aminoacyl-tRNA synthetase family. Glutamate--tRNA ligase type 1 subfamily. As to quaternary structure, monomer.

It is found in the cytoplasm. It carries out the reaction tRNA(Glu) + L-glutamate + ATP = L-glutamyl-tRNA(Glu) + AMP + diphosphate. In terms of biological role, catalyzes the attachment of glutamate to tRNA(Glu) in a two-step reaction: glutamate is first activated by ATP to form Glu-AMP and then transferred to the acceptor end of tRNA(Glu). The protein is Glutamate--tRNA ligase of Pelodictyon phaeoclathratiforme (strain DSM 5477 / BU-1).